Consider the following 233-residue polypeptide: Large ribosomal subunit protein uL3 (233 aa).

The segment at 146-171 (GSQRASHGNSRSHRVPGSIGQAQDPG) is disordered. Gln168 carries the post-translational modification N5-methylglutamine.

Belongs to the universal ribosomal protein uL3 family. In terms of assembly, part of the 50S ribosomal subunit. Forms a cluster with proteins L14 and L19. In terms of processing, methylated by PrmB.

In terms of biological role, one of the primary rRNA binding proteins, it binds directly near the 3'-end of the 23S rRNA, where it nucleates assembly of the 50S subunit. This is Large ribosomal subunit protein uL3 from Bordetella bronchiseptica (strain ATCC BAA-588 / NCTC 13252 / RB50) (Alcaligenes bronchisepticus).